The primary structure comprises 543 residues: Protein DETOXIFICATION 47, chloroplastic (543 aa).

Residues 1 to 30 constitute a chloroplast transit peptide; the sequence is MLIKSQRLTLFSPLLSKTRRIPVNSHQTLV. A coiled-coil region spans residues 55-94; it reads VIRRRIKLERVTRNCVRIDREIDEEEEEEEKERGDLVKQS. Transmembrane regions (helical) follow at residues 107–127, 135–155, 181–201, 228–248, 256–276, 278–298, 319–339, 342–362, 406–426, 443–463, 472–492, and 497–517; these read GPAM…TVVI, LAAL…FMFL, VLLF…RLFG, GLAW…LGMK, ALAA…LFLG, GIAG…YMMM, LWKI…KIAF, FIIY…QVMA, IIGA…PGLF, LLIP…LEGT, FVSS…MFVT, and GLLG…GLYL.

This sequence belongs to the multi antimicrobial extrusion (MATE) (TC 2.A.66.1) family. As to expression, preferentially expressed in the epidermal cells.

Its subcellular location is the plastid. The protein resides in the chloroplast membrane. Functionally, functions as a multidrug and toxin extrusion transporter in the export of salicylic acid (SA) from the chloroplast to the cytoplasm. Plays an essential function in plant defense via the pathogen-induced salicylic acid (SA) accumulation. Also acts as a key component of the Age-related resistance (ARR) pathway. The polypeptide is Protein DETOXIFICATION 47, chloroplastic (Arabidopsis thaliana (Mouse-ear cress)).